A 169-amino-acid polypeptide reads, in one-letter code: Steroid receptor-associated and regulated protein (169 aa).

As to quaternary structure, interacts with 14-3-3 proteins. Expressed in breast tumors with a higher expression level in estrogen receptor-positive cancers.

Functionally, may regulate the transcriptional function of androgen and estrogen receptors. The polypeptide is Steroid receptor-associated and regulated protein (Homo sapiens (Human)).